The primary structure comprises 333 residues: Glutamyl endopeptidase (333 aa).

An N-terminal signal peptide occupies residues 1–29 (MKGKFLKVSSLFVATLTTATLVSSPAANA). Residues 30 to 68 (LSSKAMDNHPQQSQSSKQQTPKIQKGGNLKPLEQREHAN) constitute a propeptide that is removed on maturation. A disordered region spans residues 33-61 (KAMDNHPQQSQSSKQQTPKIQKGGNLKPL). A compositionally biased stretch (low complexity) spans 40–54 (QQSQSSKQQTPKIQK). Active-site charge relay system residues include His-119, Asp-161, and Ser-237. The segment at 283-333 (FANDDQPNNPDNPDNPNNPDNPNNPDNPNNPNNPDNPDNGDNNNSDNPDAA) is disordered. The span at 286–333 (DDQPNNPDNPDNPNNPDNPNNPDNPNNPNNPDNPDNGDNNNSDNPDAA) shows a compositional bias: low complexity. 11 repeat units span residues 289–291 (PNN), 292–294 (PDN), 295–297 (PDN), 298–300 (PNN), 301–303 (PDN), 304–306 (PNN), 307–309 (PDN), 310–312 (PNN), 313–315 (PNN), 316–318 (PDN), and 319–321 (PDN). Residues 289–321 (PNNPDNPDNPNNPDNPNNPDNPNNPNNPDNPDN) are 11 X 3 AA repeats of P-[DN]-N.

Belongs to the peptidase S1B family. Post-translationally, proteolytically cleaved by aureolysin (aur). This cleavage leads to the activation of SspA.

It localises to the secreted. The enzyme catalyses Preferential cleavage: Glu-|-Xaa, Asp-|-Xaa.. Functionally, preferentially cleaves peptide bonds on the carboxyl-terminal side of aspartate and glutamate. Along with other extracellular proteases it is involved in colonization and infection of human tissues. Required for proteolytic maturation of thiol protease SspB and inactivation of SspC, an inhibitor of SspB. It is the most important protease for degradation of fibronectin-binding protein (FnBP) and surface protein A, which are involved in adherence to host cells. May also protect bacteria against host defense mechanism by cleaving the immunoglobulin classes IgG, IgA and IgM. May be involved in the stability of secreted lipases. This Staphylococcus aureus (strain MSSA476) protein is Glutamyl endopeptidase (sspA).